A 1365-amino-acid chain; its full sequence is Zinc finger protein 423 (1365 aa).

Over residues 1–11 the composition is skewed to basic residues; it reads MSRRKQAKPRS. A disordered region spans residues 1–69; it reads MSRRKQAKPR…SHDERVGEED (69 aa). The span at 37–51 shows a compositional bias: basic and acidic residues; the sequence is VSERDSDRKESRAVG. Residues 76 to 98 form a C2H2-type 1 zinc finger; the sequence is FTCDNCQQDFECLADLTEHRTNH. The tract at residues 99–126 is disordered; that stretch reads CPADGDDDPGLSWVASSPSSKDVASPSQ. Over residues 112-126 the composition is skewed to low complexity; that stretch reads VASSPSSKDVASPSQ. 4 consecutive C2H2-type zinc fingers follow at residues 150-172, 178-200, 206-228, and 234-256; these read YPCQFCDKSFSRLSYLKRHEQIH, FKCTFCSRLFKHKRSRDRHVKLH, YSCQECEAAFSRSDHLKIHLKTH, and FKCSICKRGFSSTSSLQSHMQAH. The tract at residues 250–280 is disordered; the sequence is QSHMQAHRKNKEHLAKKDQGKRDGSSSDVTE. The span at 261–274 shows a compositional bias: basic and acidic residues; that stretch reads EHLAKKDQGKRDGS. 3 C2H2-type zinc fingers span residues 286-309, 318-341, and 346-368; these read YMCDYCEETFSQTDELEKHVLTQH, LQCIHCPEIFSDEGTLLTHIDRTH, and HKCPMCAEQFPSVEDVYCHLDSH. The segment at 366 to 429 is disordered; sequence DSHRQPDSSN…LAPSSDHDDG (64 aa). Residues 386–400 show a composition bias toward low complexity; that stretch reads SVASMSSATPDSSAS. Residues 437–461 form a C2H2-type 9; degenerate zinc finger; it reads YSCPYCSKRDFNSLAVLEIHLKTIH. C2H2-type zinc fingers lie at residues 469–492, 513–536, and 555–578; these read HTCQLCLETLPTLYNLNEHVRKAH, FHCNYCPDMFADINSLQEHIRVSH, and FFCNQCSMGFLTESSLTEHIQQTH. The segment at 603–628 adopts a C2H2-type 13; atypical zinc-finger fold; sequence YSCPYCTNSPIFGSLLKLTKHIKENH. 7 C2H2-type zinc fingers span residues 675–697, 705–728, 736–759, 764–787, 794–817, 831–853, and 857–880; these read YPCNQCDLRFSSFEGFQAHLKSH, QSCPQCNKEDFDSQEALLQHLTIH, YVCESCDKQFSSVDDLQKHLLDMH, YHCTLCQEVFDSKVSIQVHLAVKH, YRCTACAWDFRKESDLQLHVKHSH, RKCIFCGETFGTEVELQCHITTH, and YNCRLCGKAFHAIVLLERHLREKH. The segment covering 885–895 has biased composition (gly residues); that stretch reads GGNGNGNGGSQ. The disordered stretch occupies residues 885-916; sequence GGNGNGNGGSQNGTPNGVTQSSKRSTAGSTAA. The segment covering 902 to 913 has biased composition (polar residues); it reads VTQSSKRSTAGS. Residues 954-976 form a C2H2-type 21; degenerate zinc finger; it reads YACDICGAAYTMESLLQNHRLRD. C2H2-type zinc fingers lie at residues 1000 to 1022, 1029 to 1051, 1090 to 1112, 1201 to 1224, 1249 to 1271, 1279 to 1301, 1310 to 1333, and 1340 to 1363; these read HKCNVCSRTFFSENGLREHAQTH, YMCPICGERFPSLLTLTEHKVTH, FRCVVCMQTVTSTLELKIHGTFH, LRCSECAVKFETLEDLESHIQVDH, YQCIKCQMTFETEREIQIHVANH, HECKLCNQMFDSPAKLLCHLIEH, FKCPVCFTVFVQANKLQQHIFAVH, and YDCSQCPQKFFFQTELQNHTLSQH.

It belongs to the krueppel C2H2-type zinc-finger protein family.

It localises to the nucleus. Transcription factor that can both act as an activator or a repressor depending on the context. Plays a central role in BMP signaling and olfactory neurogenesis. Associates with SMADs in response to bmp2 leading to activate transcription of BMP target genes. Acts as a transcriptional repressor involved in terminal olfactory receptor neurons differentiation. Involved in olfactory neurogenesis by participating in a developmental switch that regulates the transition from differentiation to maturation in olfactory receptor neurons. The polypeptide is Zinc finger protein 423 (znf423) (Danio rerio (Zebrafish)).